Consider the following 426-residue polypeptide: Glutamate-1-semialdehyde 2,1-aminomutase (426 aa).

An N6-(pyridoxal phosphate)lysine modification is found at Lys-265.

Belongs to the class-III pyridoxal-phosphate-dependent aminotransferase family. HemL subfamily. As to quaternary structure, homodimer. The cofactor is pyridoxal 5'-phosphate.

The protein resides in the cytoplasm. The catalysed reaction is (S)-4-amino-5-oxopentanoate = 5-aminolevulinate. Its pathway is porphyrin-containing compound metabolism; protoporphyrin-IX biosynthesis; 5-aminolevulinate from L-glutamyl-tRNA(Glu): step 2/2. In Escherichia coli O81 (strain ED1a), this protein is Glutamate-1-semialdehyde 2,1-aminomutase.